The primary structure comprises 43 residues: Protein PsbN (43 aa).

A helical membrane pass occupies residues 7-27 (IAIFISCLIVSFTGYALYTAF).

Belongs to the PsbN family.

Its subcellular location is the plastid. It is found in the chloroplast thylakoid membrane. In terms of biological role, may play a role in photosystem I and II biogenesis. The sequence is that of Protein PsbN from Psilotum nudum (Whisk fern).